Consider the following 261-residue polypeptide: Sulfur carrier protein FdhD (261 aa).

Cys-105 acts as the Cysteine persulfide intermediate in catalysis. A Mo-bis(molybdopterin guanine dinucleotide)-binding site is contributed by 245-250; that stretch reads FIRGDR.

It belongs to the FdhD family.

It is found in the cytoplasm. Functionally, required for formate dehydrogenase (FDH) activity. Acts as a sulfur carrier protein that transfers sulfur from IscS to the molybdenum cofactor prior to its insertion into FDH. This chain is Sulfur carrier protein FdhD, found in Listeria monocytogenes serotype 4b (strain F2365).